The following is a 425-amino-acid chain: Glutamate-1-semialdehyde 2,1-aminomutase (425 aa).

The residue at position 265 (Lys-265) is an N6-(pyridoxal phosphate)lysine.

This sequence belongs to the class-III pyridoxal-phosphate-dependent aminotransferase family. HemL subfamily. In terms of assembly, homodimer. It depends on pyridoxal 5'-phosphate as a cofactor.

It localises to the cytoplasm. It catalyses the reaction (S)-4-amino-5-oxopentanoate = 5-aminolevulinate. Its pathway is porphyrin-containing compound metabolism; protoporphyrin-IX biosynthesis; 5-aminolevulinate from L-glutamyl-tRNA(Glu): step 2/2. The polypeptide is Glutamate-1-semialdehyde 2,1-aminomutase (Desulfatibacillum aliphaticivorans).